We begin with the raw amino-acid sequence, 600 residues long: Elongation factor 4 (600 aa).

A tr-type G domain is found at 4 to 187; it reads KYIRNFSIVA…AIIEQIPPPL (184 aa). Residues 16-21 and 134-137 each bind GTP; these read DHGKST and NKID.

This sequence belongs to the TRAFAC class translation factor GTPase superfamily. Classic translation factor GTPase family. LepA subfamily.

The protein localises to the cell membrane. It catalyses the reaction GTP + H2O = GDP + phosphate + H(+). Its function is as follows. Required for accurate and efficient protein synthesis under certain stress conditions. May act as a fidelity factor of the translation reaction, by catalyzing a one-codon backward translocation of tRNAs on improperly translocated ribosomes. Back-translocation proceeds from a post-translocation (POST) complex to a pre-translocation (PRE) complex, thus giving elongation factor G a second chance to translocate the tRNAs correctly. Binds to ribosomes in a GTP-dependent manner. This chain is Elongation factor 4, found in Malacoplasma penetrans (strain HF-2) (Mycoplasma penetrans).